Reading from the N-terminus, the 37-residue chain is Large ribosomal subunit protein bL36c (37 aa).

Belongs to the bacterial ribosomal protein bL36 family.

The protein localises to the plastid. Its subcellular location is the chloroplast. This is Large ribosomal subunit protein bL36c from Staurastrum punctulatum (Green alga).